Here is a 389-residue protein sequence, read N- to C-terminus: Putative cyclin-F3-1 (389 aa).

The disordered stretch occupies residues Met-1 to Val-103. A compositionally biased stretch (low complexity) spans Val-19 to Glu-43.

It belongs to the cyclin family. Cyclin F subfamily.

The chain is Putative cyclin-F3-1 (CYCF3-1) from Oryza sativa subsp. japonica (Rice).